A 286-amino-acid chain; its full sequence is Polygalacturonan/rhamnogalacturonan transport system permease protein YtcP (286 aa).

The next 6 helical transmembrane spans lie at 9 to 29 (LIYG…IHVI), 69 to 89 (LLVS…LSSL), 106 to 126 (MFLV…FLVV), 131 to 151 (LLDS…NLII), 176 to 196 (GIFF…ISLF), and 251 to 271 (TIKM…YPFI). An ABC transmembrane type-1 domain is found at 69 to 271 (LLVSVFVTVI…IPVLLVYPFI (203 aa)).

Belongs to the binding-protein-dependent transport system permease family. CysTW subfamily. The complex is probably composed of two ATP-binding proteins (MsmX), two transmembrane proteins (YtcP and YteP) and a solute-binding protein (YtcQ).

The protein resides in the cell membrane. Involved in pectin degradation. Part of the ABC transporter complex YtcQP-YteP involved in the uptake of polygalacturonan and rhamnogalacturonan type I. Responsible for the translocation of the substrate across the membrane. In Bacillus subtilis (strain 168), this protein is Polygalacturonan/rhamnogalacturonan transport system permease protein YtcP (ytcP).